The primary structure comprises 147 residues: Riboflavin kinase (147 aa).

15–20 is a CDP binding site; sequence GLGEGR. Mg(2+) is bound by residues Thr44 and Asn46. FMN contacts are provided by Thr97 and Glu104. Position 109-112 (109-112) interacts with CDP; sequence TELR.

Belongs to the archaeal riboflavin kinase family. Mg(2+) is required as a cofactor.

The catalysed reaction is riboflavin + CTP = CDP + FMN + H(+). It functions in the pathway cofactor biosynthesis; FMN biosynthesis; FMN from riboflavin (CTP route): step 1/1. Its function is as follows. Catalyzes the CTP-dependent phosphorylation of riboflavin (vitamin B2) to form flavin mononucleotide (FMN). In Methanopyrus kandleri (strain AV19 / DSM 6324 / JCM 9639 / NBRC 100938), this protein is Riboflavin kinase.